The chain runs to 574 residues: Developmental and secondary metabolism regulator veA (574 aa).

Disordered regions lie at residues Met1 to Thr22, Glu39 to Pro60, Arg255 to Lys500, and Arg513 to Arg540. A Velvet domain is found at Gly25–Arg230. The Nuclear localization signal motif lies at Glu39–Cys44. 2 stretches are compositionally biased toward pro residues: residues Arg314–Ala323 and Pro330–His341. 4 stretches are compositionally biased toward polar residues: residues Pro343–Ser353, His385–Glu394, Arg406–Pro415, and Val448–Thr458. The PEST stretch occupies residues Gln457–Ala498. Composition is skewed to low complexity over residues Pro459–Ser474 and Ser482–Ser493. Residues Arg513–Pro525 show a composition bias toward basic and acidic residues.

This sequence belongs to the velvet family. VeA subfamily. Component of the heterotrimeric velvet complex composed of laeA, veA and velB; VeA acting as a bridging protein between laeA and velB.

The protein resides in the nucleus. It localises to the cytoplasm. In terms of biological role, component of the velvet transcription factor complex that controls sexual/asexual developmental ratio in response to light, promoting sexual development in the darkness while stimulating asexual sporulation under illumination. The velvet complex hat acts as a global regulator for secondary metabolite gene expression. Controls the expression of the cyclopiazonic acid, aflatrem, and aflatoxin gene clusters. Controls the expression of the sclerotium-specific pigment asparasone A gene cluster. Controls the expression of the aflavarin gene cluster. also controls the production of hydrolases and other extracellular proteins during growth on natural starch-based substrates. Regulates genes involved in the High Osmolarity Glycerol (HOG) signaling pathway. Required for the conidial and sclerotial density-dependent production. This is Developmental and secondary metabolism regulator veA from Aspergillus flavus (strain ATCC 200026 / FGSC A1120 / IAM 13836 / NRRL 3357 / JCM 12722 / SRRC 167).